The primary structure comprises 762 residues: LON peptidase N-terminal domain and RING finger protein 1 (762 aa).

The disordered stretch occupies residues 1–35 (MSSPAVARASPGGNREASGGPRSRNGPWEVGGGGE). One copy of the TPR 1 repeat lies at 47-80 (WELLLRRGELLALGGHLKGALEAFAAALRRGAPA). Residues 118–154 (CLSCRGFLSEPVTVPCGHSYCRRCLRRELRARCRLCR) form an RING-type 1 zinc finger. TPR repeat units lie at residues 201–233 (ARAA…EPSD), 235–267 (TLKI…LPNW), and 268–301 (PEVY…DEDF). Residue serine 420 is modified to Phosphoserine. The RING-type 2 zinc finger occupies 468 to 506 (CSLCMRLFFEPVTTPCGHSFCKNCLERCLDHAPYCPLCK). One can recognise a Lon N-terminal domain in the interval 547–757 (TAELSHLTKN…KIQHILTYFS (211 aa)).

This is LON peptidase N-terminal domain and RING finger protein 1 (Lonrf1) from Mus musculus (Mouse).